Reading from the N-terminus, the 311-residue chain is Homeobox-leucine zipper protein HOX1 (311 aa).

Disordered regions lie at residues 29–69 (AGGA…SDHR) and 97–160 (AETT…KKLR). Residues 119-145 (SSPNSTLSSLSGKRGAPSAATAAAAAA) are compositionally biased toward low complexity. Positions 154 to 213 (GSRKKLRLSKDQAAVLEDTFKEHNTLNPKQKAALARQLNLKPRQVEVWFQNRRARTKLKQ) form a DNA-binding region, homeobox. The interval 212–256 (KQTEVDCELLKRCCETLTDENRRLHRELQELRALKLATAAAAPHH) is leucine-zipper. The interval 279 to 311 (SAATTTRNNSGAAPARPVPTRPWPPAAAQRSSA) is disordered. Residues 280–289 (AATTTRNNSG) are compositionally biased toward polar residues. Residues 294–303 (RPVPTRPWPP) are compositionally biased toward pro residues.

This sequence belongs to the HD-ZIP homeobox family. Class II subfamily. As to quaternary structure, homodimer. May form a heterodimer with HOX2, HOX3 or HOX7. Expressed in root provascular and vascular cylinder, provascular and vascular strands of leaves, provascular and vascular strands of the whole panicle, in mature embryo provascular bundles of scutellum and embryonic axis and provascular and vascular strands of young immature spikelet organs. Expressed in differentiating and differentiated xylem and phloem elements, and in outer and inner bundle sheath cells of all vascular bundles. Expressed in auricles, ligules, culm, guard cells brac hairs and pollen.

The protein localises to the nucleus. Probable transcription repressor involved leaf development. Binds to the DNA sequence 5'-CAAT[GC]ATTG-3'. May act as a regulatory switch to specify provascular cell fate. This chain is Homeobox-leucine zipper protein HOX1 (HOX1), found in Oryza sativa subsp. japonica (Rice).